A 23-amino-acid polypeptide reads, in one-letter code: Phospholipase A2 crotoxin basic chain 3 (23 aa).

The cofactor is Ca(2+). In terms of processing, contains 7 disulfide bonds. As to expression, expressed by the venom gland.

The protein localises to the secreted. It carries out the reaction a 1,2-diacyl-sn-glycero-3-phosphocholine + H2O = a 1-acyl-sn-glycero-3-phosphocholine + a fatty acid + H(+). Its function is as follows. Snake venom phospholipase A2 (PLA2) that shows presynaptic neurotoxicity. PLA2 catalyzes the calcium-dependent hydrolysis of the 2-acyl groups in 3-sn-phosphoglycerides. This Crotalus durissus terrificus (South American rattlesnake) protein is Phospholipase A2 crotoxin basic chain 3.